The primary structure comprises 119 residues: V-type proton ATPase subunit F (119 aa).

This sequence belongs to the V-ATPase F subunit family. As to quaternary structure, V-ATPase is a heteromultimeric enzyme composed of a peripheral catalytic V1 complex (components A to H) attached to an integral membrane V0 proton pore complex (components: a, c, c', c'', d, e, f and VOA1).

The protein localises to the vacuole membrane. Functionally, subunit of the V1 complex of vacuolar(H+)-ATPase (V-ATPase), a multisubunit enzyme composed of a peripheral complex (V1) that hydrolyzes ATP and a membrane integral complex (V0) that translocates protons. V-ATPase is responsible for acidifying and maintaining the pH of intracellular compartments. This is V-type proton ATPase subunit F (VMA7) from Vanderwaltozyma polyspora (strain ATCC 22028 / DSM 70294 / BCRC 21397 / CBS 2163 / NBRC 10782 / NRRL Y-8283 / UCD 57-17) (Kluyveromyces polysporus).